A 410-amino-acid polypeptide reads, in one-letter code: UDP-N-acetylglucosamine--dolichyl-phosphate N-acetylglucosaminephosphotransferase (410 aa).

Residues 1–10 (MWAFPELPLP) lie on the Lumenal side of the membrane. Residues 11 to 40 (LPLLVNLIGSLLGFVATVTLIPAFRSHFIA) form a helical membrane-spanning segment. The Cytoplasmic portion of the chain corresponds to 41–60 (ARLCGQDLNKLSQQQIPESQ). UDP-N-acetyl-alpha-D-glucosamine-binding positions include 46–48 (QDL) and Glu58. The chain crosses the membrane as a helical span at residues 61–80 (GVISGAVFLIILFCFIPFPF). The Lumenal segment spans residues 81-93 (LNCFVEEQCKAFP). The chain crosses the membrane as a helical span at residues 94–120 (HHEFVALIGALLAICCMIFLGFADDVL). Residues 121–123 (NLR) lie on the Cytoplasmic side of the membrane. Residues 124–145 (WRHKLLLPTAASLPLLMVYFTN) traverse the membrane as a helical segment. Lys127 lines the dolichyl phosphate pocket. The Lumenal segment spans residues 146–168 (FGNTTIVVPKPFRWILGLHLDLG). A glycan (N-linked (GlcNAc...) asparagine) is linked at Asn148. The helical transmembrane segment at 169–188 (ILYYVYMGLLAVFCTNAINI) threads the bilayer. Residue 180 to 188 (VFCTNAINI) coordinates dolichyl phosphate. Asn187 serves as a coordination point for Mg(2+). The Cytoplasmic segment spans residues 189 to 194 (LAGING). Asn193 lines the UDP-N-acetyl-alpha-D-glucosamine pocket. A helical membrane pass occupies residues 195–215 (LEAGQSLVISASIIVFNLVEL). Residues 216 to 220 (EGDYR) are Lumenal-facing. Residues 221–244 (DDHIFSLYFMIPFFFTTLGLLYHN) traverse the membrane as a helical segment. The Cytoplasmic portion of the chain corresponds to 245–252 (WYPSRVFV). The chain crosses the membrane as a helical span at residues 253–271 (GDTFCYFAGMTFAVVGILG). Asp254 is a Mg(2+) binding site. The Lumenal portion of the chain corresponds to 272–273 (HF). Residues 274–295 (SKTMLLFFMPQVFNFLYSLPQL) traverse the membrane as a helical segment. Topologically, residues 296–377 (FHIIPCPRHR…LLLKVFGPIH (82 aa)) are cytoplasmic. UDP-N-acetyl-alpha-D-glucosamine is bound at residue 303–305 (RHR). Residues 378 to 402 (ERNLTLLLLLLQVLSSAATFSIRYQ) traverse the membrane as a helical segment. Residues 403–410 (LVRLFYDV) are Lumenal-facing.

This sequence belongs to the glycosyltransferase 4 family. In terms of assembly, homodimer. It depends on Mg(2+) as a cofactor.

Its subcellular location is the endoplasmic reticulum membrane. The enzyme catalyses a di-trans,poly-cis-dolichyl phosphate + UDP-N-acetyl-alpha-D-glucosamine = an N-acetyl-alpha-D-glucosaminyl-diphospho-di-trans,poly-cis-dolichol + UMP. It participates in protein modification; protein glycosylation. With respect to regulation, inhibited by natural nucleoside antibiotic tunicamycin, which acts as a structural analog and competitor of UDP-GlcNAc. Its function is as follows. UDP-N-acetylglucosamine--dolichyl-phosphate N-acetylglucosaminephosphotransferase that operates in the biosynthetic pathway of dolichol-linked oligosaccharides, the glycan precursors employed in protein asparagine (N)-glycosylation. The assembly of dolichol-linked oligosaccharides begins on the cytosolic side of the endoplasmic reticulum membrane and finishes in its lumen. The sequential addition of sugars to dolichol pyrophosphate produces dolichol-linked oligosaccharides containing fourteen sugars, including two GlcNAcs, nine mannoses and three glucoses. Once assembled, the oligosaccharide is transferred from the lipid to nascent proteins by oligosaccharyltransferases. Catalyzes the initial step of dolichol-linked oligosaccharide biosynthesis, transfering GlcNAc-1-P from cytosolic UDP-GlcNAc onto the carrier lipid dolichyl phosphate (P-dolichol), yielding GlcNAc-P-P-dolichol embedded in the cytoplasmic leaflet of the endoplasmic reticulum membrane. The chain is UDP-N-acetylglucosamine--dolichyl-phosphate N-acetylglucosaminephosphotransferase from Mus musculus (Mouse).